The primary structure comprises 147 residues: Lysozyme C-1 (147 aa).

Positions 1-18 are cleaved as a signal peptide; it reads MKALIILGFLFLSVAVQG. The region spanning 19–147 is the C-type lysozyme domain; it reads KVFERCELAR…VSSYVEGCTL (129 aa). 4 disulfide bridges follow: C24/C145, C48/C133, C83/C99, and C95/C113. Residues E53 and D71 contribute to the active site.

This sequence belongs to the glycosyl hydrolase 22 family. As to quaternary structure, monomer. In terms of tissue distribution, stomach-specific.

The catalysed reaction is Hydrolysis of (1-&gt;4)-beta-linkages between N-acetylmuramic acid and N-acetyl-D-glucosamine residues in a peptidoglycan and between N-acetyl-D-glucosamine residues in chitodextrins.. Its function is as follows. Lysozymes have primarily a bacteriolytic function; those in tissues and body fluids are associated with the monocyte-macrophage system and enhance the activity of immunoagents. The polypeptide is Lysozyme C-1 (LYZ1) (Bos taurus (Bovine)).